The primary structure comprises 281 residues: Energy-coupling factor transporter ATP-binding protein EcfA2 (281 aa).

The ABC transporter domain maps to I3–A242. G40–S47 contacts ATP.

This sequence belongs to the ABC transporter superfamily. Energy-coupling factor EcfA family. As to quaternary structure, forms a stable energy-coupling factor (ECF) transporter complex composed of 2 membrane-embedded substrate-binding proteins (S component), 2 ATP-binding proteins (A component) and 2 transmembrane proteins (T component).

Its subcellular location is the cell membrane. In terms of biological role, ATP-binding (A) component of a common energy-coupling factor (ECF) ABC-transporter complex. Unlike classic ABC transporters this ECF transporter provides the energy necessary to transport a number of different substrates. This chain is Energy-coupling factor transporter ATP-binding protein EcfA2, found in Acetivibrio thermocellus (strain ATCC 27405 / DSM 1237 / JCM 9322 / NBRC 103400 / NCIMB 10682 / NRRL B-4536 / VPI 7372) (Clostridium thermocellum).